We begin with the raw amino-acid sequence, 96 residues long: Protein RnfH (96 aa).

Belongs to the UPF0125 (RnfH) family.

The sequence is that of Protein RnfH from Pectobacterium carotovorum subsp. carotovorum (strain PC1).